The sequence spans 237 residues: Chalcone--flavanone isomerase (237 aa).

2 residues coordinate substrate: threonine 50 and serine 192.

Belongs to the chalcone isomerase family.

It carries out the reaction a chalcone = a flavanone.. Its pathway is secondary metabolite biosynthesis; flavonoid biosynthesis. Functionally, catalyzes the intramolecular cyclization of bicyclic chalcones into tricyclic (S)-flavanones. Responsible for the isomerization of 4,2',4',6'-tetrahydroxychalcone (also termed chalcone) into naringenin. In Callistephus chinensis (China aster), this protein is Chalcone--flavanone isomerase (CHI).